The following is a 1342-amino-acid chain: DNA-directed RNA polymerase subunit beta (1342 aa).

An N6-acetyllysine mark is found at Lys-1022 and Lys-1200.

Belongs to the RNA polymerase beta chain family. In terms of assembly, the RNAP catalytic core consists of 2 alpha, 1 beta, 1 beta' and 1 omega subunit. When a sigma factor is associated with the core the holoenzyme is formed, which can initiate transcription.

It carries out the reaction RNA(n) + a ribonucleoside 5'-triphosphate = RNA(n+1) + diphosphate. In terms of biological role, DNA-dependent RNA polymerase catalyzes the transcription of DNA into RNA using the four ribonucleoside triphosphates as substrates. In Shigella flexneri serotype 5b (strain 8401), this protein is DNA-directed RNA polymerase subunit beta.